A 317-amino-acid chain; its full sequence is Porphobilinogen deaminase (317 aa).

S-(dipyrrolylmethanemethyl)cysteine is present on Cys-245.

Belongs to the HMBS family. In terms of assembly, monomer. Dipyrromethane serves as cofactor.

The catalysed reaction is 4 porphobilinogen + H2O = hydroxymethylbilane + 4 NH4(+). It functions in the pathway porphyrin-containing compound metabolism; protoporphyrin-IX biosynthesis; coproporphyrinogen-III from 5-aminolevulinate: step 2/4. Its pathway is porphyrin-containing compound metabolism; chlorophyll biosynthesis. Its function is as follows. Tetrapolymerization of the monopyrrole PBG into the hydroxymethylbilane pre-uroporphyrinogen in several discrete steps. The chain is Porphobilinogen deaminase from Synechococcus sp. (strain CC9902).